A 138-amino-acid polypeptide reads, in one-letter code: Translation initiation factor IF-1, chloroplastic (138 aa).

The transit peptide at Met1–Ser53 directs the protein to the chloroplast. Residues Ala58–Arg133 form the S1-like domain.

It belongs to the IF-1 family. Component of the 30S ribosomal translation pre-initiation complex which assembles on the 30S ribosome in the order IF-2 and IF-3, IF-1 and N-formylmethionyl-tRNA(fMet); mRNA recruitment can occur at any time during PIC assembly.

It is found in the plastid. Its subcellular location is the chloroplast. Its function is as follows. One of the essential components for the initiation of protein synthesis. Stabilizes the binding of IF-2 and IF-3 on the 30S subunit to which N-formylmethionyl-tRNA(fMet) subsequently binds. Helps modulate mRNA selection, yielding the 30S pre-initiation complex (PIC). Upon addition of the 50S ribosomal subunit IF-1, IF-2 and IF-3 are released leaving the mature 70S translation initiation complex. In Glycine max (Soybean), this protein is Translation initiation factor IF-1, chloroplastic (infA).